Here is a 450-residue protein sequence, read N- to C-terminus: Trigger factor (450 aa).

Residues 163–249 (EDFVLIDYQG…LKEIQEQILP (87 aa)) form the PPIase FKBP-type domain. The segment covering 431 to 443 (PEVETEVSESAAD) has biased composition (acidic residues). Positions 431 to 450 (PEVETEVSESAADVEDKTDQ) are disordered.

It belongs to the FKBP-type PPIase family. Tig subfamily.

The protein resides in the cytoplasm. The enzyme catalyses [protein]-peptidylproline (omega=180) = [protein]-peptidylproline (omega=0). Its function is as follows. Involved in protein export. Acts as a chaperone by maintaining the newly synthesized protein in an open conformation. Functions as a peptidyl-prolyl cis-trans isomerase. In Desulforapulum autotrophicum (strain ATCC 43914 / DSM 3382 / VKM B-1955 / HRM2) (Desulfobacterium autotrophicum), this protein is Trigger factor.